A 691-amino-acid chain; its full sequence is MARTQAEPPASQPDARAAWLRDQLERANYAYYVLDQPDLPDAEYDRLFGELQQLEADHPELVTPDSPTQRVGGAVASGFTPVVHDAPMLSLNNGFSDDDIVAFDKRVADALDKPTDLAGSVTDPVEYACELKFDGLAISLRYERGVFVQASTRGDGTTGEDVTENVRTIRSIPLKLKGAHVPALLDVRGEVLMFKRDFARLNERQRAAEQREFANPRNAAAGSLRQLDPKITAQRPLSFFSYGIGVLDGMPMPDTHSALLDWYEALGLPVNRERAVVRGAQGLLEFFRKVGERRESLPYDIDGVVYKVNRRDEQDRLGFVSRAPRFALAHKFPAQEALTKLVAIDVQVGRTGAITPVARLEPVFVGGATVTNATLHNEDEVRRKDIRIGDTVIVRRAGDVIPEVVGALLERRPVDAAEFVMPTECPVCGSKIERLPDEAIARCTGGLFCPAQRKQALWHFAQRRALDIDGLGEKIIDQLVELNLVRTPADLFNLGFATLAELDRFAEKSAQNLLDSLEKAKHTTLARFIYGLGIRHVGESTAKDLAKHFGSLDPIMDASIEELLEVNDVGPIVAESIHQFFAEEHNRTVIDQLRAPGKVTWPEGPPAPKAPQGVLAGKTVVLTGTLPTLTRDAAKEMLEAAGAKVAGSVSKKTDYVVAGAEAGSKLAKAEELGIPVLDEDGLHQLLEGNTQ.

NAD(+) is bound by residues 41-45 (DAEYD), 90-91 (SL), and E130. K132 functions as the N6-AMP-lysine intermediate in the catalytic mechanism. 4 residues coordinate NAD(+): R153, E190, K307, and K331. 4 residues coordinate Zn(2+): C425, C428, C443, and C449. Residues 610 to 691 (APQGVLAGKT…LHQLLEGNTQ (82 aa)) form the BRCT domain.

This sequence belongs to the NAD-dependent DNA ligase family. LigA subfamily. It depends on Mg(2+) as a cofactor. The cofactor is Mn(2+).

It catalyses the reaction NAD(+) + (deoxyribonucleotide)n-3'-hydroxyl + 5'-phospho-(deoxyribonucleotide)m = (deoxyribonucleotide)n+m + AMP + beta-nicotinamide D-nucleotide.. Functionally, DNA ligase that catalyzes the formation of phosphodiester linkages between 5'-phosphoryl and 3'-hydroxyl groups in double-stranded DNA using NAD as a coenzyme and as the energy source for the reaction. It is essential for DNA replication and repair of damaged DNA. The sequence is that of DNA ligase from Burkholderia vietnamiensis (strain G4 / LMG 22486) (Burkholderia cepacia (strain R1808)).